The primary structure comprises 301 residues: Putative S-adenosyl-L-methionine-dependent methyltransferase MUL_0450 (301 aa).

S-adenosyl-L-methionine contacts are provided by residues Asp-127 and 156 to 157 (DL).

Belongs to the UPF0677 family.

Functionally, exhibits S-adenosyl-L-methionine-dependent methyltransferase activity. The sequence is that of Putative S-adenosyl-L-methionine-dependent methyltransferase MUL_0450 from Mycobacterium ulcerans (strain Agy99).